The following is a 511-amino-acid chain: Cytochrome P450 26B1 (511 aa).

Cysteine 440 serves as a coordination point for heme.

It belongs to the cytochrome P450 family. Heme is required as a cofactor.

Its subcellular location is the endoplasmic reticulum membrane. The protein resides in the microsome membrane. It catalyses the reaction all-trans-retinoate + reduced [NADPH--hemoprotein reductase] + O2 = all-trans-4-hydroxyretinoate + oxidized [NADPH--hemoprotein reductase] + H2O + H(+). The catalysed reaction is all-trans-retinoate + reduced [NADPH--hemoprotein reductase] + O2 = all-trans-18-hydroxyretinoate + oxidized [NADPH--hemoprotein reductase] + H2O + H(+). Its function is as follows. A cytochrome P450 monooxygenase involved in the metabolism of retinoates (RAs), the active metabolites of vitamin A, and critical signaling molecules in animals. RAs exist as at least four different isomers: all-trans-RA (atRA), 9-cis-RA, 13-cis-RA, and 9,13-dicis-RA, where atRA is considered to be the biologically active isomer, although 9-cis-RA and 13-cis-RA also have activity. Catalyzes the hydroxylation of atRA primarily at C-4 and C-18, thereby contributing to the regulation of atRA homeostasis and signaling. Hydroxylation of atRA limits its biological activity and initiates a degradative process leading to its eventual elimination. Involved in the convertion of atRA to all-trans-4-oxo-RA. Can oxidize all-trans-13,14-dihydroretinoate (DRA) to metabolites which could include all-trans-4-oxo-DRA, all-trans-4-hydroxy-DRA, all-trans-5,8-epoxy-DRA, and all-trans-18-hydroxy-DRA. The protein is Cytochrome P450 26B1 (cyp26b1) of Xenopus tropicalis (Western clawed frog).